Consider the following 129-residue polypeptide: MAFGWHSMHGSIIWFLQIAQLSTAISHDQNATAVHFLISNLFFLVSTGALWFELCAIFCDSSSSTSILSTSLLMLNYFSLKFSATGERHLVATNIAHIEAHTSIVGFMISLFTPLKETIITKYEMLVRT.

The N-terminal stretch at 1 to 24 is a signal peptide; the sequence is MAFGWHSMHGSIIWFLQIAQLSTA. Transmembrane regions (helical) follow at residues 38-58 and 95-115; these read ISNLFFLVSTGALWFELCAIF and IAHIEAHTSIVGFMISLFTPL.

It localises to the membrane. This is an uncharacterized protein from Saccharomyces cerevisiae (strain ATCC 204508 / S288c) (Baker's yeast).